We begin with the raw amino-acid sequence, 464 residues long: MSKFFERDDDIVALATPFLSSALCVIRSSGASSISKFSKIFSNHSALNSASGNTIHYGYILDSENGCKVDEVVVCLYRAPKSFTGQDAIEVMAHGSVIGIKKIIDLFLKSGFRMAEPGEFTLRAFLAKKIDLTKAEAIHEIIFAKTNKTYSLAVNKLSGALFVKIDAIKKSILNFLSAVSVYLDYEVDDHEISIPFDLILSSKAELKKLINSYKVYEKIDNGVALVLAGSVNAGKSSLFNLFLKKDRSIVSSYPGTTRDYIEASFELDGILFNLFDTAGLRDADNFVERLGIEKSNSLIKEASLVIYVIDVSSNLTKDDFLFIDSNKSNSKILFVLNKIDLKINKSTEEFVRSKVLNSSNLIMISTKNLEGIDILYDKIRALISYERVEIGLDDIIISSNRQMQLLEKAYALILDLLSKIDRQVSYDMLAFDAYEIINCLGEITGEVSSEDVLDNMFKNFCLGK.

Residues Arg-27, Glu-90, and Lys-129 each coordinate (6S)-5-formyl-5,6,7,8-tetrahydrofolate. Residues 222–384 (GVALVLAGSV…LYDKIRALIS (163 aa)) enclose the TrmE-type G domain. Residues 232–237 (NAGKSS), 251–257 (SSYPGTT), and 276–279 (DTAG) each bind GTP. 2 residues coordinate Mg(2+): Ser-236 and Thr-257. Lys-464 serves as a coordination point for (6S)-5-formyl-5,6,7,8-tetrahydrofolate.

This sequence belongs to the TRAFAC class TrmE-Era-EngA-EngB-Septin-like GTPase superfamily. TrmE GTPase family. Homodimer. Heterotetramer of two MnmE and two MnmG subunits. The cofactor is K(+).

The protein localises to the cytoplasm. Exhibits a very high intrinsic GTPase hydrolysis rate. Involved in the addition of a carboxymethylaminomethyl (cmnm) group at the wobble position (U34) of certain tRNAs, forming tRNA-cmnm(5)s(2)U34. The chain is tRNA modification GTPase MnmE from Borreliella burgdorferi (strain ATCC 35210 / DSM 4680 / CIP 102532 / B31) (Borrelia burgdorferi).